The sequence spans 665 residues: Cysteine-rich receptor-like protein kinase 26 (665 aa).

The signal sequence occupies residues 1–22 (MLSLLLPLISLLFQIQCFTVKS). Topologically, residues 23 to 283 (QPVPLNQICS…GDKNRGVPKA (261 aa)) are extracellular. Gnk2-homologous domains are found at residues 26 to 129 (PLNQ…NRTI) and 135 to 244 (ISPH…PWRF). Residues Asn-33, Asn-37, Asn-67, Asn-126, Asn-146, and Asn-266 are each glycosylated (N-linked (GlcNAc...) asparagine). The interval 251–275 (DDPSSVPATPSRPPKNETRSVTQGD) is disordered. Residues 284 to 304 (LIFASASVAIVVLFIVLLVVF) traverse the membrane as a helical segment. Residues 305 to 665 (LKLRRKENIR…YNSNTELYPR (361 aa)) are Cytoplasmic-facing. The Protein kinase domain maps to 344-624 (FSLENKLGEG…VLMLDGHTIA (281 aa)). ATP-binding positions include 350 to 358 (LGEGGFGAV) and Lys-372. At Tyr-417 the chain carries Phosphotyrosine. Catalysis depends on Asp-469, which acts as the Proton acceptor. Ser-473 carries the post-translational modification Phosphoserine. Position 510 is a phosphothreonine (Thr-510). Tyr-518 is modified (phosphotyrosine). The interval 641–665 (SDSSSSLGHNAKTSNYNSNTELYPR) is disordered. The span at 647–665 (LGHNAKTSNYNSNTELYPR) shows a compositional bias: polar residues.

Belongs to the protein kinase superfamily. Ser/Thr protein kinase family. CRK subfamily.

The protein resides in the membrane. It catalyses the reaction L-seryl-[protein] + ATP = O-phospho-L-seryl-[protein] + ADP + H(+). It carries out the reaction L-threonyl-[protein] + ATP = O-phospho-L-threonyl-[protein] + ADP + H(+). In Arabidopsis thaliana (Mouse-ear cress), this protein is Cysteine-rich receptor-like protein kinase 26 (CRK26).